The following is a 122-amino-acid chain: Ribonuclease P protein component (122 aa).

Belongs to the RnpA family. As to quaternary structure, consists of a catalytic RNA component (M1 or rnpB) and a protein subunit.

The enzyme catalyses Endonucleolytic cleavage of RNA, removing 5'-extranucleotides from tRNA precursor.. Functionally, RNaseP catalyzes the removal of the 5'-leader sequence from pre-tRNA to produce the mature 5'-terminus. It can also cleave other RNA substrates such as 4.5S RNA. The protein component plays an auxiliary but essential role in vivo by binding to the 5'-leader sequence and broadening the substrate specificity of the ribozyme. The chain is Ribonuclease P protein component from Lactobacillus helveticus (strain DPC 4571).